Reading from the N-terminus, the 348-residue chain is Nitrogenase vanadium-iron protein beta chain (348 aa).

The [8Fe-7S] cluster site is built by cysteine 31, cysteine 56, cysteine 115, and serine 153.

The protein belongs to the NifD/NifK/NifE/NifN family. As to quaternary structure, hexamer of two alpha, two beta, and two delta chains. Requires [8Fe-7S] cluster as cofactor.

The enzyme catalyses N2 + 8 reduced [2Fe-2S]-[ferredoxin] + 16 ATP + 16 H2O = H2 + 8 oxidized [2Fe-2S]-[ferredoxin] + 2 NH4(+) + 16 ADP + 16 phosphate + 6 H(+). In terms of biological role, this vanadium-iron protein is part of the nitrogenase complex that catalyzes the key enzymatic reactions in nitrogen fixation. This chain is Nitrogenase vanadium-iron protein beta chain (vnfK), found in Azorhizophilus paspali (Azotobacter paspali).